The primary structure comprises 270 residues: 4-hydroxy-tetrahydrodipicolinate reductase (270 aa).

NAD(+) contacts are provided by residues Gly9 to Met14 and Glu35. Residue Arg36 participates in NADP(+) binding. NAD(+)-binding positions include Gly99–Thr101 and Ala123–Phe126. His156 serves as the catalytic Proton donor/acceptor. His157 serves as a coordination point for (S)-2,3,4,5-tetrahydrodipicolinate. The Proton donor role is filled by Lys160. Gly166–Thr167 is a binding site for (S)-2,3,4,5-tetrahydrodipicolinate.

Belongs to the DapB family.

It localises to the cytoplasm. It catalyses the reaction (S)-2,3,4,5-tetrahydrodipicolinate + NAD(+) + H2O = (2S,4S)-4-hydroxy-2,3,4,5-tetrahydrodipicolinate + NADH + H(+). It carries out the reaction (S)-2,3,4,5-tetrahydrodipicolinate + NADP(+) + H2O = (2S,4S)-4-hydroxy-2,3,4,5-tetrahydrodipicolinate + NADPH + H(+). It participates in amino-acid biosynthesis; L-lysine biosynthesis via DAP pathway; (S)-tetrahydrodipicolinate from L-aspartate: step 4/4. In terms of biological role, catalyzes the conversion of 4-hydroxy-tetrahydrodipicolinate (HTPA) to tetrahydrodipicolinate. The polypeptide is 4-hydroxy-tetrahydrodipicolinate reductase (Haemophilus influenzae (strain PittGG)).